Reading from the N-terminus, the 123-residue chain is Small ribosomal subunit protein uS13 (123 aa).

Residues 95 to 123 (GLPVRGQRTKTNARTRKGPARTVAGKKKK) form a disordered region.

This sequence belongs to the universal ribosomal protein uS13 family. As to quaternary structure, part of the 30S ribosomal subunit. Forms a loose heterodimer with protein S19. Forms two bridges to the 50S subunit in the 70S ribosome.

Functionally, located at the top of the head of the 30S subunit, it contacts several helices of the 16S rRNA. In the 70S ribosome it contacts the 23S rRNA (bridge B1a) and protein L5 of the 50S subunit (bridge B1b), connecting the 2 subunits; these bridges are implicated in subunit movement. Contacts the tRNAs in the A and P-sites. This Heliobacterium modesticaldum (strain ATCC 51547 / Ice1) protein is Small ribosomal subunit protein uS13.